A 342-amino-acid polypeptide reads, in one-letter code: MSARGGPLARLEARITREWQRRGALAWALTPFACVFGLCAALRRTAYTQGWKQPVDVGVPVVVVGNVTVGGTGKTPTVIALVDALRAAGFTPGVVSRGYGANVQAPTAVTAASRASAAGDEPLLIARRTGAPVWVCPDRVAAAQALRAAHPEVDVIVSDDGLQHYRLARTVELVVFDHRLGGNGFLLPAGPLREPLSRHRDATLVNDPYSGALPPWPDTYALALTPGAAWHLDQPTLRRPLSQFANERVLAAAGIGAPERFFATLRAAGLAPATRALPDHYAFADNPFVDDAVDAILITEKDAVKLGASWRDARLWVVPVEAALDPRLIALVVEKLRGRSPA.

68–75 (TVGGTGKT) contacts ATP.

This sequence belongs to the LpxK family.

It carries out the reaction a lipid A disaccharide + ATP = a lipid IVA + ADP + H(+). Its pathway is glycolipid biosynthesis; lipid IV(A) biosynthesis; lipid IV(A) from (3R)-3-hydroxytetradecanoyl-[acyl-carrier-protein] and UDP-N-acetyl-alpha-D-glucosamine: step 6/6. Transfers the gamma-phosphate of ATP to the 4'-position of a tetraacyldisaccharide 1-phosphate intermediate (termed DS-1-P) to form tetraacyldisaccharide 1,4'-bis-phosphate (lipid IVA). This Burkholderia vietnamiensis (strain G4 / LMG 22486) (Burkholderia cepacia (strain R1808)) protein is Tetraacyldisaccharide 4'-kinase.